Consider the following 110-residue polypeptide: Nucleoid-associated protein Sfum_2790 (110 aa).

It belongs to the YbaB/EbfC family. In terms of assembly, homodimer.

It is found in the cytoplasm. The protein resides in the nucleoid. In terms of biological role, binds to DNA and alters its conformation. May be involved in regulation of gene expression, nucleoid organization and DNA protection. The polypeptide is Nucleoid-associated protein Sfum_2790 (Syntrophobacter fumaroxidans (strain DSM 10017 / MPOB)).